A 116-amino-acid chain; its full sequence is Large ribosomal subunit protein uL22 (116 aa).

This sequence belongs to the universal ribosomal protein uL22 family. Part of the 50S ribosomal subunit.

In terms of biological role, this protein binds specifically to 23S rRNA; its binding is stimulated by other ribosomal proteins, e.g. L4, L17, and L20. It is important during the early stages of 50S assembly. It makes multiple contacts with different domains of the 23S rRNA in the assembled 50S subunit and ribosome. The globular domain of the protein is located near the polypeptide exit tunnel on the outside of the subunit, while an extended beta-hairpin is found that lines the wall of the exit tunnel in the center of the 70S ribosome. In Gloeobacter violaceus (strain ATCC 29082 / PCC 7421), this protein is Large ribosomal subunit protein uL22.